The chain runs to 599 residues: Afamin (599 aa).

The first 21 residues, 1-21 (MKLLKLTGFIFFLFFLTESLT), serve as a signal peptide directing secretion. 3 consecutive Albumin domains span residues 22-210 (LPTQ…IPVT), 211-403 (QYLK…KFNE), and 404-599 (TTEK…KIGN). An N-linked (GlcNAc...) (complex) asparagine glycan is attached at N33. Intrachain disulfides connect C77–C86, C99–C114, C113–C124, C148–C193, C192–C201, C224–C270, C269–C277, C289–C303, C302–C313, C340–C385, and C384–C393. N-linked (GlcNAc...) (complex) asparagine glycosylation occurs at N109. Residues 215 to 319 (AFSSYQKHVC…RGQCIINSNK (105 aa)) are binding pocket for hydrophobic ligands. The N-linked (GlcNAc...) (complex) asparagine; atypical glycan is linked to N383. N402 is a glycosylation site (N-linked (GlcNAc...) (complex) asparagine). Cystine bridges form between C416/C462, C461/C470, C483/C499, C498/C509, C536/C581, and C580/C589. N488 is a glycosylation site (N-linked (GlcNAc...) asparagine).

It belongs to the ALB/AFP/VDB family. In terms of assembly, forms a 1:1 complex with Wnt family members; interacts with WNT1, WNT2B, WNT3, WNT3A, WNT5A, WNT7A, WNT7B, WNT8, WNT9A, WNT9B, WNT10A and WNT10B. In terms of processing, N-glycosylated; more than 90% of the glycans are sialylated. In terms of tissue distribution, high level detected in plasma but also in extravascular fluids such as follicular and cerebrospinal fluids (at protein level).

The protein localises to the secreted. Functionally, functions as a carrier for hydrophobic molecules in body fluids. Essential for the solubility and activity of lipidated Wnt family members, including WNT1, WNT2B, WNT3, WNT3A, WNT5A, WNT7A, WNT7B, WNT8, WNT9A, WNT9B, WNT10A and WNT10B. Binds vitamin E. May transport vitamin E in body fluids under conditions where the lipoprotein system is not sufficient. May be involved in the transport of vitamin E across the blood-brain barrier. The protein is Afamin (AFM) of Homo sapiens (Human).